Consider the following 463-residue polypeptide: Phosphoglucosamine mutase (463 aa).

The Phosphoserine intermediate role is filled by serine 101. Mg(2+)-binding residues include serine 101, aspartate 256, aspartate 258, and aspartate 260. Serine 101 bears the Phosphoserine mark.

This sequence belongs to the phosphohexose mutase family. Mg(2+) is required as a cofactor. Activated by phosphorylation.

The enzyme catalyses alpha-D-glucosamine 1-phosphate = D-glucosamine 6-phosphate. Functionally, catalyzes the conversion of glucosamine-6-phosphate to glucosamine-1-phosphate. The sequence is that of Phosphoglucosamine mutase from Desulforapulum autotrophicum (strain ATCC 43914 / DSM 3382 / VKM B-1955 / HRM2) (Desulfobacterium autotrophicum).